Here is a 388-residue protein sequence, read N- to C-terminus: Cuticle-degrading protease (388 aa).

Residues 1–18 (MHLSALLTLLPAVLAAPA) form the signal peptide. Residues 19 to 107 (TIGRRAEPAP…IEKDAVMRIS (89 aa)) constitute a propeptide that is removed on maturation. Positions 41-106 (KYIVKFKDDI…FIEKDAVMRI (66 aa)) constitute an Inhibitor I9 domain. Positions 116-388 (PWGLGRISHR…TVNYLAYNGA (273 aa)) constitute a Peptidase S8 domain. Intrachain disulfides connect Cys143–Cys233 and Cys288–Cys360. Residues Asp148 and His179 each act as charge relay system in the active site. An N-linked (GlcNAc...) asparagine glycan is attached at Asn296. The Charge relay system role is filled by Ser334.

Belongs to the peptidase S8 family.

The protein localises to the secreted. Functionally, capable of breaching the insect cuticle. This Metarhizium anisopliae (Entomophthora anisopliae) protein is Cuticle-degrading protease (PR1).